The following is a 221-amino-acid chain: Telomere repeats-binding bouquet formation protein 2 (221 aa).

This sequence belongs to the TERB2 family. In terms of assembly, component of the MAJIN-TERB1-TERB2 complex, composed of MAJIN, TERB1 and TERB2.

It is found in the chromosome. The protein localises to the telomere. It localises to the nucleus inner membrane. Functionally, meiosis-specific telomere-associated protein involved in meiotic telomere attachment to the nucleus inner membrane, a crucial step for homologous pairing and synapsis. Component of the MAJIN-TERB1-TERB2 complex, which promotes telomere cap exchange by mediating attachment of telomeric DNA to the inner nuclear membrane and replacement of the protective cap of telomeric chromosomes: in early meiosis, the MAJIN-TERB1-TERB2 complex associates with telomeric DNA and the shelterin/telosome complex. During prophase, the complex matures and promotes release of the shelterin/telosome complex from telomeric DNA. The sequence is that of Telomere repeats-binding bouquet formation protein 2 from Bos taurus (Bovine).